Here is a 486-residue protein sequence, read N- to C-terminus: Cardiolipin synthase A (486 aa).

2 helical membrane passes run 3–23 (TFYT…IAGV) and 38–58 (MAWL…YLSF). 2 consecutive PLD phosphodiesterase domains span residues 219-246 (MDLR…VDPR) and 399-426 (EDGL…DMRS). Catalysis depends on residues His-224, Lys-226, Asp-231, His-404, Lys-406, and Asp-411.

Belongs to the phospholipase D family. Cardiolipin synthase subfamily. ClsA sub-subfamily.

It localises to the cell inner membrane. The catalysed reaction is 2 a 1,2-diacyl-sn-glycero-3-phospho-(1'-sn-glycerol) = a cardiolipin + glycerol. Functionally, catalyzes the reversible phosphatidyl group transfer from one phosphatidylglycerol molecule to another to form cardiolipin (CL) (diphosphatidylglycerol) and glycerol. This Serratia proteamaculans (strain 568) protein is Cardiolipin synthase A.